The following is a 512-amino-acid chain: Serine--tRNA ligase, cytoplasmic (512 aa).

The residue at position 1 (Met1) is an N-acetylmethionine. Residues 9–61 (RVDKGGDPALIRETQEKRFKDPGLVDQLVKADSEWRRCRFRADNLNKLKNLCS) are interaction with tRNA. Ser241 is modified (phosphoserine). Residues Thr271 and Arg302 each coordinate L-serine. ATP-binding positions include 302-304 (RQE) and 318-321 (VHQF). At Lys323 the chain carries N6-acetyllysine. Glu325 provides a ligand contact to L-serine. 391–394 (ELVS) lines the ATP pocket. Residues Asn427 and Thr429 each contribute to the L-serine site. The interval 472-512 (KPAPIDQEPSKKQKKQHEGSKKKAKEVTLESQLQNMEVTEA) is disordered. Residues 479-499 (EPSKKQKKQHEGSKKKAKEVT) are compositionally biased toward basic and acidic residues. A Nuclear localization signal motif is present at residues 482 to 494 (KKQKKQHEGSKKK). Residues 500-512 (LESQLQNMEVTEA) are compositionally biased toward polar residues.

It belongs to the class-II aminoacyl-tRNA synthetase family. Type-1 seryl-tRNA synthetase subfamily. As to quaternary structure, homodimer. The tRNA molecule may bind across the dimer. Interacts with SIRT2. Interacts with METTL6; interaction is required for the tRNA N(3)-methylcytidine methyltransferase activity of METTL6.

It localises to the cytoplasm. Its subcellular location is the nucleus. The enzyme catalyses tRNA(Ser) + L-serine + ATP = L-seryl-tRNA(Ser) + AMP + diphosphate + H(+). It carries out the reaction tRNA(Sec) + L-serine + ATP = L-seryl-tRNA(Sec) + AMP + diphosphate + H(+). It functions in the pathway aminoacyl-tRNA biosynthesis; selenocysteinyl-tRNA(Sec) biosynthesis; L-seryl-tRNA(Sec) from L-serine and tRNA(Sec): step 1/1. Catalyzes the attachment of serine to tRNA(Ser) in a two-step reaction: serine is first activated by ATP to form Ser-AMP and then transferred to the acceptor end of tRNA(Ser). Is probably also able to aminoacylate tRNA(Sec) with serine, to form the misacylated tRNA L-seryl-tRNA(Sec), which will be further converted into selenocysteinyl-tRNA(Sec). In the nucleus, binds to the VEGFA core promoter and prevents MYC binding and transcriptional activation by MYC. Recruits SIRT2 to the VEGFA promoter, promoting deacetylation of histone H4 at 'Lys-16' (H4K16). Thereby, inhibits the production of VEGFA and sprouting angiogenesis mediated by VEGFA. The sequence is that of Serine--tRNA ligase, cytoplasmic (SARS1) from Cricetulus griseus (Chinese hamster).